Reading from the N-terminus, the 192-residue chain is dTTP/UTP pyrophosphatase (192 aa).

Asp-75 functions as the Proton acceptor in the catalytic mechanism.

It belongs to the Maf family. YhdE subfamily. The cofactor is a divalent metal cation.

The protein localises to the cytoplasm. It carries out the reaction dTTP + H2O = dTMP + diphosphate + H(+). The catalysed reaction is UTP + H2O = UMP + diphosphate + H(+). In terms of biological role, nucleoside triphosphate pyrophosphatase that hydrolyzes dTTP and UTP. May have a dual role in cell division arrest and in preventing the incorporation of modified nucleotides into cellular nucleic acids. The polypeptide is dTTP/UTP pyrophosphatase (Bdellovibrio bacteriovorus (strain ATCC 15356 / DSM 50701 / NCIMB 9529 / HD100)).